A 288-amino-acid chain; its full sequence is B3 domain-containing protein At2g35310 (288 aa).

DNA-binding regions (TF-B3) lie at residues F19–D114 and A196–P288.

It is found in the nucleus. The protein is B3 domain-containing protein At2g35310 of Arabidopsis thaliana (Mouse-ear cress).